Reading from the N-terminus, the 853-residue chain is MATAEVGGGGGEGDAAAAAVARAGGGGGGGGGGGEDALFTELWSACAGPLVTVPRVGEKVFYFPQGHIEQVEASTNQVGEQRMQLYNLPWKILCEVMNVELKAEPDTDEVYAQLTLLPELKQQEDNGSTEEEVPSAPAAGHVRPRVHSFCKTLTASDTSTHGGFSVLRRHADECLPPLDMSRQPPTQELVAKDLHGVEWRFRHIFRGQPRRHLLQSGWSVFVSAKRLVAGDAFIFLRGENGELRVGVRRAMRQQTNVPSSVISSHSMHLGVLATAWHAVNTGTMFTVYYKPRTSPAEFVVPYDRYMESLKRNYSIGMRFKMRFEGEEAPEQRFTGTIVGMGDSDPAGWPESKWRSLKVRWDEASSIPRPERVSPWQIEPAVSPPPVNPLPVPRTKRLRPNATALPADSSAIAKEAATKVVVESEPNGTQRTFQTQENATPKSGFGNSSELESAQKSIMRPSGFDREKNNTPIQWKLGSDGWMQMSKPESYSEMLSGFQPPKDVQTPQGFCSLPEQITAGHSNFWHTVNAQYQDQQSNHNMFPSSWSFMPPNTRLGLNKQNYSMIQEAGVLSQRPGNTKFGNGVYAALPGRGTEQYSGGWFGHMMPNSHMDDTQPRLIKPKPLVVAHGDVQKAKGASCKLFGIHLDSPAKSEPLKSPSSVVYDGTPQTPGATEWRRPDVTEVEKCSDPSKAMKPLDTPQPDSVPEKPSSQQASRNMSCKSQGVSTRSCKKVHKQGIALGRSVDLTKFNGYEELIAELDDMFDFNGELKGPKKEWMVVYTDNEGDMMLVGDDPWIEFCDMVHKIFIYTREEVQRMNPGTLNSRSEDSHANSMERGSVGREMRGCLSTSSLNSENC.

The segment at 121–141 (KQQEDNGSTEEEVPSAPAAGH) is disordered. Residues 149–251 (FCKTLTASDT…ELRVGVRRAM (103 aa)) constitute a DNA-binding region (TF-B3). Disordered stretches follow at residues 422 to 471 (ESEP…NNTP) and 647 to 723 (PAKS…QGVS). Over residues 425-455 (PNGTQRTFQTQENATPKSGFGNSSELESAQK) the composition is skewed to polar residues. The span at 672 to 686 (EWRRPDVTEVEKCSD) shows a compositional bias: basic and acidic residues. A compositionally biased stretch (polar residues) spans 706-723 (PSSQQASRNMSCKSQGVS). Positions 725–809 (RSCKKVHKQG…HKIFIYTREE (85 aa)) constitute a PB1 domain. Residues 815–853 (PGTLNSRSEDSHANSMERGSVGREMRGCLSTSSLNSENC) are disordered. Over residues 843–853 (LSTSSLNSENC) the composition is skewed to polar residues.

The protein belongs to the ARF family. In terms of assembly, homodimers and heterodimers.

It is found in the nucleus. Functionally, auxin response factors (ARFs) are transcriptional factors that bind specifically to the DNA sequence 5'-TGTCTC-3' found in the auxin-responsive promoter elements (AuxREs). This Oryza sativa subsp. indica (Rice) protein is Auxin response factor 23 (ARF23).